The following is a 424-amino-acid chain: Vasopressin V1b receptor (424 aa).

Residues 1–22 (MDSGPLWDANPTPRGTLSAPNA) form a disordered region. The Extracellular segment spans residues 1–35 (MDSGPLWDANPTPRGTLSAPNATTPWLGRDEELAK). Positions 13–22 (PRGTLSAPNA) are enriched in polar residues. The N-linked (GlcNAc...) asparagine glycan is linked to asparagine 21. A helical membrane pass occupies residues 36-59 (VEIGVLATVLVLATGGNLAVLLTL). At 60–71 (GQLGRKRSRMHL) the chain is on the cytoplasmic side. The chain crosses the membrane as a helical span at residues 72 to 93 (FVLHLALTDLAVALFQVLPQLL). Over 94–108 (WDITYRFQGPDLLCR) the chain is Extracellular. A disulfide bridge connects residues cysteine 107 and cysteine 186. Residues 109 to 130 (AVKYLQVLSMFASTYMLLAMTL) traverse the membrane as a helical segment. Topologically, residues 131 to 151 (DRYLAVCHPLRSLQQPGQSTY) are cytoplasmic. The chain crosses the membrane as a helical span at residues 152 to 173 (LLIAAPWLLAAIFSLPQVFIFS). The Extracellular portion of the chain corresponds to 174 to 201 (LREVIQGSGVLDCWADFGFPWGPRAYLT). Residues 202 to 222 (WTTLAIFVLPVTMLTACYSLI) form a helical membrane-spanning segment. The Cytoplasmic segment spans residues 223–283 (CHEICKNLKV…RAKIRTVKMT (61 aa)). A helical transmembrane segment spans residues 284 to 303 (FVIVLAYIACWAPFFSVQMW). The Extracellular segment spans residues 304–321 (SVWDKNAPDEDSTNVAFT). Residues 322–341 (ISMLLGNLNSCCNPWIYMGF) form a helical membrane-spanning segment. Over 342–424 (NSHLLPRPLR…GEGTAETIIF (83 aa)) the chain is Cytoplasmic. Residues 398-417 (SGRPRPEESPRDLELADGEG) are disordered. Over residues 401-411 (PRPEESPRDLE) the composition is skewed to basic and acidic residues.

This sequence belongs to the G-protein coupled receptor 1 family. Vasopressin/oxytocin receptor subfamily.

Its subcellular location is the cell membrane. Its function is as follows. Receptor for arginine vasopressin. The activity of this receptor is mediated by G proteins which activate a phosphatidyl-inositol-calcium second messenger system. (Microbial infection) During SARS coronavirus-2/SARS-CoV-2 infection, may recognize and internalize the complex formed by AVP/Arg-vasopressin, SARS-CoV-2 spike protein and secreted ACE2 through DNM2/dynamin 2-dependent endocytosis. The sequence is that of Vasopressin V1b receptor from Homo sapiens (Human).